Reading from the N-terminus, the 214-residue chain is Alpha-S1-casein (214 aa).

The signal sequence occupies residues 1 to 15 (MKLLILTCLVAVALA). Phosphoserine is present on residues serine 63, serine 79, serine 81, serine 82, serine 83, and serine 90. Repeats lie at residues 85 to 99 (EIVP…IQKE) and 125 to 140 (EIVP…SMKE).

This sequence belongs to the alpha-casein family. As to expression, mammary gland specific. Secreted in milk.

Its subcellular location is the secreted. Important role in the capacity of milk to transport calcium phosphate. The chain is Alpha-S1-casein (CSN1S1) from Bubalus bubalis (Domestic water buffalo).